The chain runs to 107 residues: Phosphoribosyl-ATP pyrophosphatase (107 aa).

Belongs to the PRA-PH family.

It is found in the cytoplasm. It catalyses the reaction 1-(5-phospho-beta-D-ribosyl)-ATP + H2O = 1-(5-phospho-beta-D-ribosyl)-5'-AMP + diphosphate + H(+). The protein operates within amino-acid biosynthesis; L-histidine biosynthesis; L-histidine from 5-phospho-alpha-D-ribose 1-diphosphate: step 2/9. This is Phosphoribosyl-ATP pyrophosphatase from Bacillus cereus (strain AH187).